Here is a 346-residue protein sequence, read N- to C-terminus: Haptoglobin (346 aa).

The first 18 residues, methionine 1–alanine 18, serve as a signal peptide directing secretion. A Sushi domain is found at aspartate 31 to alanine 87. 4 cysteine pairs are disulfide-bonded: cysteine 52-cysteine 85, cysteine 89-cysteine 206, cysteine 249-cysteine 280, and cysteine 291-cysteine 321. The 243-residue stretch at isoleucine 102 to alanine 344 folds into the Peptidase S1 domain. Asparagine 147 and asparagine 181 each carry an N-linked (GlcNAc...) asparagine glycan. The segment at valine 258–glycine 263 is interaction with CD163.

This sequence belongs to the peptidase S1 family. Tetramer of two alpha and two beta chains; disulfide-linked. The hemoglobin/haptoglobin complex is composed of a haptoglobin dimer bound to two hemoglobin alpha-beta dimers. Interacts with CD163. Interacts with ERGIC3. Expressed by the liver and secreted in plasma.

The protein resides in the secreted. In terms of biological role, as a result of hemolysis, hemoglobin is found to accumulate in the kidney and is secreted in the urine. Haptoglobin captures, and combines with free plasma hemoglobin to allow hepatic recycling of heme iron and to prevent kidney damage. Haptoglobin also acts as an antioxidant, has antibacterial activity and plays a role in modulating many aspects of the acute phase response. Hemoglobin/haptoglobin complexes are rapidly cleared by the macrophage CD163 scavenger receptor expressed on the surface of liver Kupfer cells through an endocytic lysosomal degradation pathway. This chain is Haptoglobin (HP), found in Mesocricetus auratus (Golden hamster).